The primary structure comprises 234 residues: 7-cyano-7-deazaguanine synthase (234 aa).

Position 13–23 (13–23 (LSGGQDSTTCL)) interacts with ATP. Zn(2+) contacts are provided by C193, C201, C204, and C207.

Belongs to the QueC family. Requires Zn(2+) as cofactor.

The catalysed reaction is 7-carboxy-7-deazaguanine + NH4(+) + ATP = 7-cyano-7-deazaguanine + ADP + phosphate + H2O + H(+). It functions in the pathway purine metabolism; 7-cyano-7-deazaguanine biosynthesis. Its function is as follows. Catalyzes the ATP-dependent conversion of 7-carboxy-7-deazaguanine (CDG) to 7-cyano-7-deazaguanine (preQ(0)). The chain is 7-cyano-7-deazaguanine synthase from Chromobacterium violaceum (strain ATCC 12472 / DSM 30191 / JCM 1249 / CCUG 213 / NBRC 12614 / NCIMB 9131 / NCTC 9757 / MK).